A 215-amino-acid chain; its full sequence is Phosphatidylserine decarboxylase proenzyme (215 aa).

Catalysis depends on Ser183, which acts as the Schiff-base intermediate with substrate; via pyruvic acid. Ser183 carries the post-translational modification Pyruvic acid (Ser); by autocatalysis.

This sequence belongs to the phosphatidylserine decarboxylase family. PSD-A subfamily. In terms of assembly, heterodimer of a large membrane-associated beta subunit and a small pyruvoyl-containing alpha subunit. Pyruvate is required as a cofactor. Post-translationally, is synthesized initially as an inactive proenzyme. Formation of the active enzyme involves a self-maturation process in which the active site pyruvoyl group is generated from an internal serine residue via an autocatalytic post-translational modification. Two non-identical subunits are generated from the proenzyme in this reaction, and the pyruvate is formed at the N-terminus of the alpha chain, which is derived from the carboxyl end of the proenzyme. The post-translation cleavage follows an unusual pathway, termed non-hydrolytic serinolysis, in which the side chain hydroxyl group of the serine supplies its oxygen atom to form the C-terminus of the beta chain, while the remainder of the serine residue undergoes an oxidative deamination to produce ammonia and the pyruvoyl prosthetic group on the alpha chain.

Its subcellular location is the cell membrane. It catalyses the reaction a 1,2-diacyl-sn-glycero-3-phospho-L-serine + H(+) = a 1,2-diacyl-sn-glycero-3-phosphoethanolamine + CO2. It participates in phospholipid metabolism; phosphatidylethanolamine biosynthesis; phosphatidylethanolamine from CDP-diacylglycerol: step 2/2. Its function is as follows. Catalyzes the formation of phosphatidylethanolamine (PtdEtn) from phosphatidylserine (PtdSer). The protein is Phosphatidylserine decarboxylase proenzyme of Symbiobacterium thermophilum (strain DSM 24528 / JCM 14929 / IAM 14863 / T).